Here is a 63-residue protein sequence, read N- to C-terminus: Beta-defensin 6 (63 aa).

Residues Met1–Ser22 form the signal peptide. At Gln23 the chain carries Pyrrolidone carboxylic acid. 3 disulfide bridges follow: Cys31–Cys59, Cys38–Cys52, and Cys42–Cys60.

It belongs to the beta-defensin family. Predominantly expressed in skeletal muscle, also expressed in esophagus, tongue, and trachea. Also expressed in lung when induced by lipopolysaccharide.

It localises to the secreted. Its function is as follows. Has potent antibacterial activity against E.coli (ATCC 25922). The sequence is that of Beta-defensin 6 (Defb6) from Mus musculus (Mouse).